The primary structure comprises 433 residues: GTPase Der (433 aa).

EngA-type G domains follow at residues 5–167 (KKVL…GRVN) and 174–349 (IKVG…DQLE). GTP contacts are provided by residues 11-18 (GRPNVGKS), 58-62 (DTGGF), 119-122 (NKVD), 180-187 (GKPNSGKS), 227-231 (DTAGI), and 292-295 (SKWD). The KH-like domain occupies 349 to 429 (ELKTNTPDLN…PILVELREKI (81 aa)).

This sequence belongs to the TRAFAC class TrmE-Era-EngA-EngB-Septin-like GTPase superfamily. EngA (Der) GTPase family. In terms of assembly, associates with the 50S ribosomal subunit.

GTPase that plays an essential role in the late steps of ribosome biogenesis. In Borrelia garinii subsp. bavariensis (strain ATCC BAA-2496 / DSM 23469 / PBi) (Borreliella bavariensis), this protein is GTPase Der.